The chain runs to 425 residues: UPF0597 protein VF_0641 (425 aa).

This sequence belongs to the UPF0597 family.

This Aliivibrio fischeri (strain ATCC 700601 / ES114) (Vibrio fischeri) protein is UPF0597 protein VF_0641.